Here is a 329-residue protein sequence, read N- to C-terminus: Phosphate acyltransferase (329 aa).

The protein belongs to the PlsX family. Homodimer. Probably interacts with PlsY.

The protein localises to the cytoplasm. The catalysed reaction is a fatty acyl-[ACP] + phosphate = an acyl phosphate + holo-[ACP]. It participates in lipid metabolism; phospholipid metabolism. Its function is as follows. Catalyzes the reversible formation of acyl-phosphate (acyl-PO(4)) from acyl-[acyl-carrier-protein] (acyl-ACP). This enzyme utilizes acyl-ACP as fatty acyl donor, but not acyl-CoA. This Anoxybacillus flavithermus (strain DSM 21510 / WK1) protein is Phosphate acyltransferase.